The sequence spans 263 residues: HTH-type transcriptional repressor NanR (263 aa).

The segment at 1 to 24 (MSPMNAFDSQTEDSSPAIGRNLRS) is disordered. The region spanning 30-98 (KKLSEMVEEE…NGERARVSRP (69 aa)) is the HTH gntR-type domain. Residues 58–77 (ERELMAFFNVGRPSVREALA) constitute a DNA-binding region (H-T-H motif).

Belongs to the NanR family.

Functionally, transcriptional repressor that controls expression of the genes required for the catabolism of sialic acids. This is HTH-type transcriptional repressor NanR from Escherichia coli O127:H6 (strain E2348/69 / EPEC).